Here is a 1075-residue protein sequence, read N- to C-terminus: DNA-directed RNA polymerase subunit beta (1075 aa).

Belongs to the RNA polymerase beta chain family. As to quaternary structure, in plastids the minimal PEP RNA polymerase catalytic core is composed of four subunits: alpha, beta, beta', and beta''. When a (nuclear-encoded) sigma factor is associated with the core the holoenzyme is formed, which can initiate transcription.

The protein resides in the plastid. The protein localises to the chloroplast. The enzyme catalyses RNA(n) + a ribonucleoside 5'-triphosphate = RNA(n+1) + diphosphate. Functionally, DNA-dependent RNA polymerase catalyzes the transcription of DNA into RNA using the four ribonucleoside triphosphates as substrates. This chain is DNA-directed RNA polymerase subunit beta, found in Oryza sativa (Rice).